We begin with the raw amino-acid sequence, 103 residues long: UPF0473 protein LVIS_1220 (103 aa).

The protein belongs to the UPF0473 family.

This is UPF0473 protein LVIS_1220 from Levilactobacillus brevis (strain ATCC 367 / BCRC 12310 / CIP 105137 / JCM 1170 / LMG 11437 / NCIMB 947 / NCTC 947) (Lactobacillus brevis).